The sequence spans 106 residues: Large ribosomal subunit protein uL22 (106 aa).

The protein belongs to the universal ribosomal protein uL22 family. As to quaternary structure, part of the 50S ribosomal subunit.

Its function is as follows. This protein binds specifically to 23S rRNA; its binding is stimulated by other ribosomal proteins, e.g. L4, L17, and L20. It is important during the early stages of 50S assembly. It makes multiple contacts with different domains of the 23S rRNA in the assembled 50S subunit and ribosome. The globular domain of the protein is located near the polypeptide exit tunnel on the outside of the subunit, while an extended beta-hairpin is found that lines the wall of the exit tunnel in the center of the 70S ribosome. In Nautilia profundicola (strain ATCC BAA-1463 / DSM 18972 / AmH), this protein is Large ribosomal subunit protein uL22.